The following is a 1998-amino-acid chain: Histone acetyltransferase KAT6A (1998 aa).

The region spanning 1-77 (MVKLANPLYT…LNSYKDPDNP (77 aa)) is the SAMD1-like winged helix (WH) domain. The tract at residues 1–144 (MVKLANPLYT…CGGTAASGFH (144 aa)) is required for activation of RUNX1-1. Residues 52 to 166 (ELSVKDGTIL…HGRLLKDGPL (115 aa)) are required for nuclear localization. The interval 72–93 (KDPDNPGRIALPKPRNHGKLDN) is disordered. An H15 domain is found at 95 to 171 (QSVDWNKLLK…KDGPLYRLNT (77 aa)). The interval 144–662 (HQQLRLAIKR…RKGYGRFLID (519 aa)) is interaction with PML. Residue Lys-172 is modified to N6-acetyllysine. 2 PHD-type zinc fingers span residues 199–258 (DKPV…LRWQ) and 255–306 (LRWQ…GMWI). Residues 312–662 (PRKKGRKLLQ…RKGYGRFLID (351 aa)) form an interaction with RUNX1-1 region. Positions 336–377 (GRPKNRLKKQSTVSKGPFSKVRTGPGRGRKRKITVSSQSASS) are disordered. Residues Lys-350 and Lys-355 each carry the N6-acetyllysine modification. Thr-369 is subject to Phosphothreonine; by PKB/AKT1. Ser-419 carries the phosphoserine modification. The disordered stretch occupies residues 440–464 (KGNRKSSTSHWPTDNQDGWESKQES). A compositionally biased stretch (polar residues) spans 444-457 (KSSTSHWPTDNQDG). At Ser-471 the chain carries Phosphoserine. The interval 486-776 (IQEQALQKVG…VDPECLRWTP (291 aa)) is catalytic. The MYST-type HAT domain maps to 502 to 776 (PQVRCPSVIE…VDPECLRWTP (275 aa)). The segment at 505–808 (RCPSVIEFGK…EPQGQERELE (304 aa)) is mediates interaction with BRPF1, required for histone H3 acetyltransferase activity. The segment at 535-560 (LYLCEFCLKYMKSRTILQQHMKKCGW) adopts a C2HC MYST-type zinc-finger fold. Lys-602 is subject to N6-acetyllysine; by autocatalysis. Residues 643–647 (SCIMI) and 652–658 (QRKGYGR) contribute to the acetyl-CoA site. Glu-678 serves as the catalytic Proton donor/acceptor. Ser-682 serves as a coordination point for acetyl-CoA. A disordered region spans residues 783-947 (VVSEEEDEEA…RFSESADLWR (165 aa)). Ser-785 is modified (phosphoserine). Residues 785–797 (SEEEDEEADDGEK) are compositionally biased toward acidic residues. A compositionally biased stretch (basic and acidic residues) spans 798–840 (EEPQGQERELETRERVGKSVSRENKDQDSSSLIESEKKPEVKE). Lys-815 carries the N6-acetyllysine modification. Residue Lys-835 forms a Glycyl lysine isopeptide (Lys-Gly) (interchain with G-Cter in SUMO2) linkage. The segment covering 865 to 874 (RRGRCGRKNR) has biased composition (basic residues). Over residues 875–886 (KTQERFGDKDSK) the composition is skewed to basic and acidic residues. A Phosphotyrosine modification is found at Tyr-900. Positions 903 to 916 (CEEKSAASRERYTE) are enriched in basic and acidic residues. Residues Ser-940 and Ser-953 each carry the phosphoserine modification. A disordered region spans residues 982 to 1079 (GFSESSEEEE…EEEEDENELF (98 aa)). Lys-1006 carries the N6-acetyllysine modification. Over residues 1008-1029 (TLKRKKPILHRRRRVRKRKHHN) the composition is skewed to basic residues. A compositionally biased stretch (low complexity) spans 1030-1041 (SSVVTETISETT). Acidic residues-rich tracts occupy residues 1042–1052 (EVLDEPFEDSD) and 1064–1077 (FEIEEEEEEEDENE). Ser-1088, Ser-1089, and Ser-1114 each carry phosphoserine. Disordered stretches follow at residues 1096–1175 (QASS…PGFK), 1195–1436 (PIKP…EGAY), 1450–1567 (QSYT…STMG), and 1630–1702 (TCVV…CSMN). Over residues 1106 to 1119 (DEEEEEEESDDADD) the composition is skewed to acidic residues. Over residues 1135 to 1146 (NSASLEPDTSTP) the composition is skewed to polar residues. Over residues 1147–1173 (MKKKKGWPKGKSRKPIHWKKRPGRKPG) the composition is skewed to basic residues. Residues 1203-1228 (RTQESEELVEVKEGLVEERKEEMHTE) are compositionally biased toward basic and acidic residues. Composition is skewed to acidic residues over residues 1229–1240 (ADEEAEEEEDAA) and 1281–1298 (EEPQELEEQEQEEEDEVT). Composition is skewed to basic and acidic residues over residues 1316–1333 (HLDSLKTKEPEGQPARED), 1351–1360 (DSRENAKDKD), and 1392–1413 (DSNTKEELIELKEEEEIPHSEL). The span at 1472 to 1496 (HNSPISSIPSHPSQSVRSVSSPSMP) shows a compositional bias: low complexity. Residues 1501–1522 (GYTQISPEQGSLSAPSMQNMET) are compositionally biased toward polar residues. The interaction with RUNX1-2 stretch occupies residues 1510 to 1635 (GSLSAPSMQN…KSPQTCVVER (126 aa)). The interval 1510–1735 (GSLSAPSMQN…YERIPGDFGA (226 aa)) is interaction with PML. Residues 1527–1541 (DVPSVSDHSQQVVDS) show a composition bias toward low complexity. A compositionally biased stretch (polar residues) spans 1549 to 1567 (IESTTENYENPSSYDSTMG). 2 stretches are compositionally biased toward pro residues: residues 1639–1658 (NQQPPPPPPPPPPPQQPQPQ) and 1665–1693 (PQPPPPQPQQQPPPPPQQQPQPPPPPQQQ). Residues 1907 to 1942 (SMNMNTLNAMNSYRMTQPMMNSSYHSNPAYMNQTAQ) are required for activation of RUNX1-2.

This sequence belongs to the MYST (SAS/MOZ) family. Component of the MOZ/MORF complex composed at least of ING5, KAT6A, KAT6B, MEAF6 and one of BRPF1, BRD1/BRPF2 and BRPF3. Interacts with RUNX1; phosphorylation of RUNX1 enhances the interaction. Interacts with RUNX2. Interacts with p53/TP53. Interacts with PML and this interaction positively regulates its acetylation activity towards p53/TP53. Autoacetylated. Autoacetylation at Lys-602 is required for proper function. In terms of processing, phosphorylation at Thr-369 by PKB/AKT1 inhibits its interaction with PML and negatively regulates its acetylation activity towards p53/TP53.

It is found in the nucleus. Its subcellular location is the nucleolus. It localises to the nucleoplasm. The protein resides in the PML body. The enzyme catalyses L-lysyl-[protein] + acetyl-CoA = N(6)-acetyl-L-lysyl-[protein] + CoA + H(+). Its function is as follows. Histone acetyltransferase that acetylates lysine residues in histone H3 and histone H4 (in vitro). Component of the MOZ/MORF complex which has a histone H3 acetyltransferase activity. May act as a transcriptional coactivator for RUNX1 and RUNX2. Acetylates p53/TP53 at 'Lys-120' and 'Lys-382' and controls its transcriptional activity via association with PML. The chain is Histone acetyltransferase KAT6A (Kat6a) from Rattus norvegicus (Rat).